A 77-amino-acid chain; its full sequence is MMFLFVSLFMFIFKWQRLIFILISLEFMMLSLFLKFSYVLGEMMFFYFMCFSVISSILGMVVMVGNMKFFGSDNCIF.

2 helical membrane-spanning segments follow: residues 15 to 37 and 44 to 64; these read WQRL…LKFS and MFFY…VVMV.

It belongs to the complex I subunit 4L family.

The protein resides in the mitochondrion membrane. It carries out the reaction a ubiquinone + NADH + 5 H(+)(in) = a ubiquinol + NAD(+) + 4 H(+)(out). In terms of biological role, core subunit of the mitochondrial membrane respiratory chain NADH dehydrogenase (Complex I) that is believed to belong to the minimal assembly required for catalysis. Complex I functions in the transfer of electrons from NADH to the respiratory chain. The immediate electron acceptor for the enzyme is believed to be ubiquinone. The protein is NADH-ubiquinone oxidoreductase chain 4L of Caenorhabditis elegans.